The primary structure comprises 383 residues: Acetylornithine deacetylase (383 aa).

His-80 provides a ligand contact to Zn(2+). The active site involves Asp-82. Asp-112 contacts Zn(2+). Glu-144 is a catalytic residue. Zn(2+)-binding residues include Glu-145, Glu-169, and His-355.

Belongs to the peptidase M20A family. ArgE subfamily. Homodimer. It depends on Zn(2+) as a cofactor. Requires Co(2+) as cofactor. Glutathione serves as cofactor.

Its subcellular location is the cytoplasm. The enzyme catalyses N(2)-acetyl-L-ornithine + H2O = L-ornithine + acetate. The protein operates within amino-acid biosynthesis; L-arginine biosynthesis; L-ornithine from N(2)-acetyl-L-ornithine (linear): step 1/1. Functionally, catalyzes the hydrolysis of the amide bond of N(2)-acetylated L-amino acids. Cleaves the acetyl group from N-acetyl-L-ornithine to form L-ornithine, an intermediate in L-arginine biosynthesis pathway, and a branchpoint in the synthesis of polyamines. In Pectobacterium carotovorum subsp. carotovorum (strain PC1), this protein is Acetylornithine deacetylase.